The sequence spans 151 residues: UPF0178 protein Desal_2673 (151 aa).

This sequence belongs to the UPF0178 family.

This is UPF0178 protein Desal_2673 from Maridesulfovibrio salexigens (strain ATCC 14822 / DSM 2638 / NCIMB 8403 / VKM B-1763) (Desulfovibrio salexigens).